The chain runs to 191 residues: dITP/XTP pyrophosphatase (191 aa).

8–13 (SKNQGK) lines the substrate pocket. Glutamate 38 and aspartate 67 together coordinate Mg(2+). Aspartate 67 acts as the Proton acceptor in catalysis. Substrate is bound by residues serine 68, 146–149 (FGYD), lysine 169, and 174–175 (HR).

This sequence belongs to the HAM1 NTPase family. Homodimer. Mg(2+) serves as cofactor.

It carries out the reaction XTP + H2O = XMP + diphosphate + H(+). The enzyme catalyses dITP + H2O = dIMP + diphosphate + H(+). The catalysed reaction is ITP + H2O = IMP + diphosphate + H(+). Pyrophosphatase that catalyzes the hydrolysis of nucleoside triphosphates to their monophosphate derivatives, with a high preference for the non-canonical purine nucleotides XTP (xanthosine triphosphate), dITP (deoxyinosine triphosphate) and ITP. Seems to function as a house-cleaning enzyme that removes non-canonical purine nucleotides from the nucleotide pool, thus preventing their incorporation into DNA/RNA and avoiding chromosomal lesions. The polypeptide is dITP/XTP pyrophosphatase (Prochlorococcus marinus subsp. pastoris (strain CCMP1986 / NIES-2087 / MED4)).